A 545-amino-acid chain; its full sequence is Chaperonin GroEL 1 (545 aa).

ATP is bound by residues 29–32 (TLGP), 86–90 (DGTTT), Gly-413, 479–481 (DAA), and Asp-495. A disordered region spans residues 525 to 545 (PEPKENNPAGSGAGMGGDFDY). The segment covering 535 to 545 (SGAGMGGDFDY) has biased composition (gly residues).

This sequence belongs to the chaperonin (HSP60) family. As to quaternary structure, forms a cylinder of 14 subunits composed of two heptameric rings stacked back-to-back. Interacts with the co-chaperonin GroES.

Its subcellular location is the cytoplasm. The catalysed reaction is ATP + H2O + a folded polypeptide = ADP + phosphate + an unfolded polypeptide.. Together with its co-chaperonin GroES, plays an essential role in assisting protein folding. The GroEL-GroES system forms a nano-cage that allows encapsulation of the non-native substrate proteins and provides a physical environment optimized to promote and accelerate protein folding. The polypeptide is Chaperonin GroEL 1 (Thermosynechococcus vestitus (strain NIES-2133 / IAM M-273 / BP-1)).